The chain runs to 73 residues: Translation initiation factor IF-1 (73 aa).

One can recognise an S1-like domain in the interval 1-73; that stretch reads MAKKQGAIEI…TRGRIVYRYK (73 aa).

The protein belongs to the IF-1 family. Component of the 30S ribosomal translation pre-initiation complex which assembles on the 30S ribosome in the order IF-2 and IF-3, IF-1 and N-formylmethionyl-tRNA(fMet); mRNA recruitment can occur at any time during PIC assembly.

The protein localises to the cytoplasm. Its function is as follows. One of the essential components for the initiation of protein synthesis. Stabilizes the binding of IF-2 and IF-3 on the 30S subunit to which N-formylmethionyl-tRNA(fMet) subsequently binds. Helps modulate mRNA selection, yielding the 30S pre-initiation complex (PIC). Upon addition of the 50S ribosomal subunit IF-1, IF-2 and IF-3 are released leaving the mature 70S translation initiation complex. In Streptomyces coelicolor (strain ATCC BAA-471 / A3(2) / M145), this protein is Translation initiation factor IF-1.